Here is a 531-residue protein sequence, read N- to C-terminus: Peptide chain release factor 3 (531 aa).

In terms of domain architecture, tr-type G spans 10–278 (RRRRTFAIIS…SLIDWAPAPK (269 aa)). Residues 19 to 26 (SHPDAGKT), 87 to 91 (DTPGH), and 141 to 144 (NKYD) each bind GTP.

Belongs to the TRAFAC class translation factor GTPase superfamily. Classic translation factor GTPase family. PrfC subfamily.

The protein resides in the cytoplasm. In terms of biological role, increases the formation of ribosomal termination complexes and stimulates activities of RF-1 and RF-2. It binds guanine nucleotides and has strong preference for UGA stop codons. It may interact directly with the ribosome. The stimulation of RF-1 and RF-2 is significantly reduced by GTP and GDP, but not by GMP. This chain is Peptide chain release factor 3, found in Neisseria gonorrhoeae (strain ATCC 700825 / FA 1090).